The sequence spans 638 residues: E3 ubiquitin-protein ligase TRIM47 (638 aa).

An N-acetylmethionine modification is found at methionine 1. The RING-type zinc finger occupies 9-58 (CPICLEPLREPVTLPCGHNFCLACLGALWPHRGASGAGGPGGAARCPLCQ). The residue at position 72 (threonine 72) is a Phosphothreonine. Residues 79–119 (LRQGSGPGSGPGPAPALAPEPSAPSALPSVPEPSAPCAPEP) form a disordered region. Pro residues-rich tracts occupy residues 88 to 100 (GPGP…PEPS) and 108 to 119 (VPEPSAPCAPEP). The segment at 177–217 (LEESLCPRHLRPLERYCRAERVCLCEACAAQEHRGHELVPL) adopts a B box-type zinc-finger fold. Zn(2+)-binding residues include cysteine 182, histidine 185, cysteine 204, and histidine 209. Residues 296–324 (MLGRSQGDLRRQEEQRSRLSRARQNLSQV) are a coiled coil. Disordered stretches follow at residues 300 to 322 (SQGD…QNLS) and 384 to 411 (LRGP…LEST). Over residues 302–312 (GDLRRQEEQRS) the composition is skewed to basic and acidic residues. The 222-residue stretch at 410–631 (STNLLESEAP…LQIGPLKKSC (222 aa)) folds into the B30.2/SPRY domain. Serine 461 carries the post-translational modification Phosphoserine. Arginine 582 is modified (omega-N-methylarginine). Serine 588 is subject to Phosphoserine.

It belongs to the TRIM/RBCC family. Low expression in most tissues. Higher expression in kidney tubular cells. Overexpressed in astrocytoma tumor cells.

It is found in the cytoplasm. The protein localises to the nucleus. The enzyme catalyses S-ubiquitinyl-[E2 ubiquitin-conjugating enzyme]-L-cysteine + [acceptor protein]-L-lysine = [E2 ubiquitin-conjugating enzyme]-L-cysteine + N(6)-ubiquitinyl-[acceptor protein]-L-lysine.. The protein operates within protein modification; protein ubiquitination. E3 ubiquitin-protein ligase that mediates the ubiquitination and proteasomal degradation of CYLD. The protein is E3 ubiquitin-protein ligase TRIM47 of Homo sapiens (Human).